Reading from the N-terminus, the 273-residue chain is Urease accessory protein UreD (273 aa).

Positions 1-29 are disordered; the sequence is MLMRTATPLDQPRAIGSARVSSKRVNGGS.

Belongs to the UreD family. As to quaternary structure, ureD, UreF and UreG form a complex that acts as a GTP-hydrolysis-dependent molecular chaperone, activating the urease apoprotein by helping to assemble the nickel containing metallocenter of UreC. The UreE protein probably delivers the nickel.

It localises to the cytoplasm. Required for maturation of urease via the functional incorporation of the urease nickel metallocenter. In Roseobacter denitrificans (strain ATCC 33942 / OCh 114) (Erythrobacter sp. (strain OCh 114)), this protein is Urease accessory protein UreD.